The primary structure comprises 608 residues: Aspartate--tRNA(Asp/Asn) ligase (608 aa).

An L-aspartate-binding site is contributed by glutamate 175. Residues 199-202 (QLFK) are aspartate. Arginine 221 serves as a coordination point for L-aspartate. ATP is bound by residues 221–223 (RDE) and glutamine 230. An L-aspartate-binding site is contributed by histidine 453. Residue glutamate 487 participates in ATP binding. Position 494 (arginine 494) interacts with L-aspartate. Residue 539-542 (GWDR) coordinates ATP. The tract at residues 566 to 608 (IDPLTDAPAAITPQQRKEAGIDAKPKPKAEAQAEAQAEESAEK) is disordered. A compositionally biased stretch (basic and acidic residues) spans 580 to 596 (QRKEAGIDAKPKPKAEA).

The protein belongs to the class-II aminoacyl-tRNA synthetase family. Type 1 subfamily. In terms of assembly, homodimer.

It localises to the cytoplasm. The catalysed reaction is tRNA(Asx) + L-aspartate + ATP = L-aspartyl-tRNA(Asx) + AMP + diphosphate. Aspartyl-tRNA synthetase with relaxed tRNA specificity since it is able to aspartylate not only its cognate tRNA(Asp) but also tRNA(Asn). Reaction proceeds in two steps: L-aspartate is first activated by ATP to form Asp-AMP and then transferred to the acceptor end of tRNA(Asp/Asn). In Corynebacterium glutamicum (strain R), this protein is Aspartate--tRNA(Asp/Asn) ligase.